The sequence spans 86 residues: Co-chaperonin GroES (86 aa).

Belongs to the GroES chaperonin family. As to quaternary structure, heptamer of 7 subunits arranged in a ring. Interacts with the chaperonin GroEL.

It is found in the cytoplasm. In terms of biological role, together with the chaperonin GroEL, plays an essential role in assisting protein folding. The GroEL-GroES system forms a nano-cage that allows encapsulation of the non-native substrate proteins and provides a physical environment optimized to promote and accelerate protein folding. GroES binds to the apical surface of the GroEL ring, thereby capping the opening of the GroEL channel. This Campylobacter jejuni subsp. doylei (strain ATCC BAA-1458 / RM4099 / 269.97) protein is Co-chaperonin GroES.